The primary structure comprises 364 residues: Hepatitis A virus cellular receptor 1 (364 aa).

Positions 1-20 are cleaved as a signal peptide; that stretch reads MHPQVVILSLILHLADSVAG. An Ig-like V-type domain is found at 21 to 121; sequence SVKVGGEAGP…WFNDMKITVS (101 aa). Over 21–295 the chain is Extracellular; it reads SVKVGGEAGP…SLLTANTTKG (275 aa). Cystine bridges form between Cys-36/Cys-105, Cys-46/Cys-57, and Cys-52/Cys-104. A glycan (N-linked (GlcNAc...) asparagine) is linked at Asn-65. 12 consecutive repeat copies span residues 138 to 143, 144 to 149, 150 to 155, 156 to 160, 161 to 165, 166 to 171, 172 to 177, 178 to 183, 184 to 189, 190 to 195, 196 to 201, and 202 to 207. The interval 138–207 is 12 X 6 AA approximate tandem repeats of V-P-T-T-T-T]; sequence VPTVTTVRTS…TTTSVPVTTT (70 aa). The tract at residues 216 to 257 is disordered; it reads PLPRQNHEPVATSPSSPQPAETHPTTLQGAIRREPTSSPLYS. Positions 227–243 are enriched in polar residues; it reads TSPSSPQPAETHPTTLQ. Residues Asn-263, Asn-277, and Asn-291 are each glycosylated (N-linked (GlcNAc...) asparagine). Residues 296 to 316 traverse the membrane as a helical segment; sequence IYAGVCISVLVLLALLGVIIA. Residues 317–364 lie on the Cytoplasmic side of the membrane; the sequence is KKYFFKKEVQQLSVSFSSLQIKALQNAVEKEVQAEDNIYIENSLYATD. Glycyl lysine isopeptide (Lys-Gly) (interchain with G-Cter in ubiquitin) cross-links involve residues Lys-338 and Lys-346.

This sequence belongs to the immunoglobulin superfamily. TIM family. Interacts with STAM. Interacts with SELPLG. As to quaternary structure, (Microbial infection) Interacts with hepatitis A virus capsid proteins. In terms of assembly, (Microbial infection) Interacts with Ebolavirus envelope glycoprotein GP. (Microbial infection) Interacts with Zika virus envelope protein E. Ubiquitinated at two lysine residues Lys-338 and Lys-346 on its cytoplasmic domain. Ubiquitination promotes receptor endocytosis and target receptors for lysosomal degradation and termination of receptor signaling. In terms of processing, (Microbial infection) Ubiquitination is required for Dengue virus endocytosis. In terms of tissue distribution, widely expressed, with highest levels in kidney and testis. Expressed by activated CD4+ T-cells during the development of helper T-cells responses.

The protein localises to the cell membrane. In terms of biological role, phosphatidylserine receptor that plays an important functional role in regulatory B-cells homeostasis including generation, expansion and suppressor functions. As P-selectin/SELPLG ligand, plays a specialized role in activated but not naive T-cell trafficking during inflammatory responses. Controls thereby T-cell accumulation in the inflamed central nervous system (CNS) and the induction of autoimmune disease. Also regulates expression of various anti-inflammatory cytokines and co-inhibitory ligands including IL10. Acts as a regulator of T-cell proliferation. May play a role in kidney injury and repair. Functionally, (Microbial infection) Acts as a receptor for Hepatitis A virus. Its function is as follows. (Microbial infection) Acts as a receptor for Ebolavirus and Marburg virus by binding exposed phosphatidyl-serine at the surface of virion membrane. Serves as a dual receptor for Ebolavirus by also interacting with envelope glycoprotein GP. (Microbial infection) Acts as a receptor for Dengue virus by binding exposed phosphatidyl-serine at the surface of virion membrane. TIM1 and Dengue virus are co-internalized during virus entry. In terms of biological role, (Microbial infection) Acts as a receptor for Zika virus by binding to envelope protein E. Functionally, (Microbial infection) Plays a positive role in Chikungunya virus cell entry. This Homo sapiens (Human) protein is Hepatitis A virus cellular receptor 1 (HAVCR1).